The following is a 166-amino-acid chain: Phosphopantetheine adenylyltransferase (166 aa).

Substrate is bound at residue Ser9. Residues 9–10 (SF) and His17 each bind ATP. Substrate-binding residues include Lys41, Leu74, and Lys88. ATP-binding positions include 89 to 91 (GLR), Glu99, and 123 to 129 (YIHLSST).

This sequence belongs to the bacterial CoaD family. As to quaternary structure, homohexamer. Mg(2+) serves as cofactor.

Its subcellular location is the cytoplasm. The catalysed reaction is (R)-4'-phosphopantetheine + ATP + H(+) = 3'-dephospho-CoA + diphosphate. It functions in the pathway cofactor biosynthesis; coenzyme A biosynthesis; CoA from (R)-pantothenate: step 4/5. In terms of biological role, reversibly transfers an adenylyl group from ATP to 4'-phosphopantetheine, yielding dephospho-CoA (dPCoA) and pyrophosphate. The sequence is that of Phosphopantetheine adenylyltransferase from Pseudarthrobacter chlorophenolicus (strain ATCC 700700 / DSM 12829 / CIP 107037 / JCM 12360 / KCTC 9906 / NCIMB 13794 / A6) (Arthrobacter chlorophenolicus).